An 89-amino-acid chain; its full sequence is Elongation factor 1-beta (89 aa).

The protein belongs to the EF-1-beta/EF-1-delta family.

In terms of biological role, promotes the exchange of GDP for GTP in EF-1-alpha/GDP, thus allowing the regeneration of EF-1-alpha/GTP that could then be used to form the ternary complex EF-1-alpha/GTP/AAtRNA. This Methanosarcina mazei (strain ATCC BAA-159 / DSM 3647 / Goe1 / Go1 / JCM 11833 / OCM 88) (Methanosarcina frisia) protein is Elongation factor 1-beta.